Consider the following 94-residue polypeptide: Probable Fe(2+)-trafficking protein (94 aa).

Belongs to the Fe(2+)-trafficking protein family.

Could be a mediator in iron transactions between iron acquisition and iron-requiring processes, such as synthesis and/or repair of Fe-S clusters in biosynthetic enzymes. This is Probable Fe(2+)-trafficking protein from Marinomonas sp. (strain MWYL1).